A 422-amino-acid polypeptide reads, in one-letter code: Ameloblastin (422 aa).

The first 26 residues, 1–26, serve as a signal peptide directing secretion; the sequence is MSASKIPLFKMKGLLLFLSLVKMSLA. P42 carries the hydroxyproline modification. Residue S48 is modified to Phosphoserine. A glycan (O-linked (GalNAc...) serine) is linked at S117. Positions 271–321 are disordered; sequence GLNQNSPKGGDFTVEVDSPVSVTKGPEKGEGPEGSPLQEASPDKGENPALL.

The protein belongs to the ameloblastin family. In terms of tissue distribution, ameloblast-specific.

The protein resides in the secreted. Its subcellular location is the extracellular space. The protein localises to the extracellular matrix. Its function is as follows. Involved in the mineralization and structural organization of enamel. This Rattus norvegicus (Rat) protein is Ameloblastin (Ambn).